The following is a 376-amino-acid chain: 1-deoxy-D-xylulose 5-phosphate reductoisomerase (376 aa).

Positions 12, 13, 14, 15, 39, and 116 each coordinate NADPH. Position 117 (lysine 117) interacts with 1-deoxy-D-xylulose 5-phosphate. Glutamate 118 contributes to the NADPH binding site. Mn(2+) is bound at residue aspartate 142. Residues serine 143, glutamate 144, serine 164, and histidine 187 each coordinate 1-deoxy-D-xylulose 5-phosphate. Mn(2+) is bound at residue glutamate 144. Glycine 193 is an NADPH binding site. Positions 200, 205, 206, and 209 each coordinate 1-deoxy-D-xylulose 5-phosphate. Glutamate 209 contacts Mn(2+).

Belongs to the DXR family. Mg(2+) is required as a cofactor. It depends on Mn(2+) as a cofactor.

The enzyme catalyses 2-C-methyl-D-erythritol 4-phosphate + NADP(+) = 1-deoxy-D-xylulose 5-phosphate + NADPH + H(+). The protein operates within isoprenoid biosynthesis; isopentenyl diphosphate biosynthesis via DXP pathway; isopentenyl diphosphate from 1-deoxy-D-xylulose 5-phosphate: step 1/6. Functionally, catalyzes the NADPH-dependent rearrangement and reduction of 1-deoxy-D-xylulose-5-phosphate (DXP) to 2-C-methyl-D-erythritol 4-phosphate (MEP). This is 1-deoxy-D-xylulose 5-phosphate reductoisomerase from Thermotoga maritima (strain ATCC 43589 / DSM 3109 / JCM 10099 / NBRC 100826 / MSB8).